Here is a 216-residue protein sequence, read N- to C-terminus: ATP phosphoribosyltransferase (216 aa).

It belongs to the ATP phosphoribosyltransferase family. Short subfamily. Heteromultimer composed of HisG and HisZ subunits.

It localises to the cytoplasm. It catalyses the reaction 1-(5-phospho-beta-D-ribosyl)-ATP + diphosphate = 5-phospho-alpha-D-ribose 1-diphosphate + ATP. It functions in the pathway amino-acid biosynthesis; L-histidine biosynthesis; L-histidine from 5-phospho-alpha-D-ribose 1-diphosphate: step 1/9. Its function is as follows. Catalyzes the condensation of ATP and 5-phosphoribose 1-diphosphate to form N'-(5'-phosphoribosyl)-ATP (PR-ATP). Has a crucial role in the pathway because the rate of histidine biosynthesis seems to be controlled primarily by regulation of HisG enzymatic activity. The protein is ATP phosphoribosyltransferase of Rubrobacter xylanophilus (strain DSM 9941 / JCM 11954 / NBRC 16129 / PRD-1).